The primary structure comprises 557 residues: Dihydroxy-acid dehydratase (557 aa).

Cys50 is a [2Fe-2S] cluster binding site. Asp82 is a Mg(2+) binding site. Cys123 is a binding site for [2Fe-2S] cluster. Mg(2+) contacts are provided by Asp124 and Lys125. Residue Lys125 is modified to N6-carboxylysine. Cys195 contacts [2Fe-2S] cluster. Residue Glu447 participates in Mg(2+) binding. The Proton acceptor role is filled by Ser473.

It belongs to the IlvD/Edd family. Homodimer. [2Fe-2S] cluster serves as cofactor. It depends on Mg(2+) as a cofactor.

It carries out the reaction (2R)-2,3-dihydroxy-3-methylbutanoate = 3-methyl-2-oxobutanoate + H2O. The catalysed reaction is (2R,3R)-2,3-dihydroxy-3-methylpentanoate = (S)-3-methyl-2-oxopentanoate + H2O. It participates in amino-acid biosynthesis; L-isoleucine biosynthesis; L-isoleucine from 2-oxobutanoate: step 3/4. The protein operates within amino-acid biosynthesis; L-valine biosynthesis; L-valine from pyruvate: step 3/4. Functionally, functions in the biosynthesis of branched-chain amino acids. Catalyzes the dehydration of (2R,3R)-2,3-dihydroxy-3-methylpentanoate (2,3-dihydroxy-3-methylvalerate) into 2-oxo-3-methylpentanoate (2-oxo-3-methylvalerate) and of (2R)-2,3-dihydroxy-3-methylbutanoate (2,3-dihydroxyisovalerate) into 2-oxo-3-methylbutanoate (2-oxoisovalerate), the penultimate precursor to L-isoleucine and L-valine, respectively. The sequence is that of Dihydroxy-acid dehydratase from Ralstonia nicotianae (strain ATCC BAA-1114 / GMI1000) (Ralstonia solanacearum).